A 332-amino-acid polypeptide reads, in one-letter code: DNA-directed RNA polymerase subunit alpha (332 aa).

The alpha N-terminal domain (alpha-NTD) stretch occupies residues 1–232 (MQVSNFLKPR…DQLTAFVELE (232 aa)). The alpha C-terminal domain (alpha-CTD) stretch occupies residues 246–332 (IDPVLLQPID…LREEETKVTA (87 aa)).

It belongs to the RNA polymerase alpha chain family. Homodimer. The RNAP catalytic core consists of 2 alpha, 1 beta, 1 beta' and 1 omega subunit. When a sigma factor is associated with the core the holoenzyme is formed, which can initiate transcription.

The enzyme catalyses RNA(n) + a ribonucleoside 5'-triphosphate = RNA(n+1) + diphosphate. Its function is as follows. DNA-dependent RNA polymerase catalyzes the transcription of DNA into RNA using the four ribonucleoside triphosphates as substrates. This chain is DNA-directed RNA polymerase subunit alpha, found in Nitrosococcus oceani (strain ATCC 19707 / BCRC 17464 / JCM 30415 / NCIMB 11848 / C-107).